Consider the following 265-residue polypeptide: Indole-3-glycerol phosphate synthase (265 aa).

Belongs to the TrpC family.

The enzyme catalyses 1-(2-carboxyphenylamino)-1-deoxy-D-ribulose 5-phosphate + H(+) = (1S,2R)-1-C-(indol-3-yl)glycerol 3-phosphate + CO2 + H2O. Its pathway is amino-acid biosynthesis; L-tryptophan biosynthesis; L-tryptophan from chorismate: step 4/5. The sequence is that of Indole-3-glycerol phosphate synthase from Hyphomonas neptunium (strain ATCC 15444).